A 201-amino-acid chain; its full sequence is Proteasome subunit beta type-2 (201 aa).

Position 1 is an N-acetylmethionine (methionine 1).

The protein belongs to the peptidase T1B family. As to quaternary structure, the 26S proteasome consists of a 20S proteasome core and two 19S regulatory subunits. The 20S proteasome core is a barrel-shaped complex made of 28 subunits that are arranged in four stacked rings. The two outer rings are each formed by seven alpha subunits, and the two inner rings are formed by seven beta subunits. The proteolytic activity is exerted by three beta-subunits PSMB5, PSMB6 and PSMB7. (Microbial infection) Interacts with HIV-1 protein Tat.

It localises to the cytoplasm. The protein localises to the nucleus. Functionally, non-catalytic component of the 20S core proteasome complex involved in the proteolytic degradation of most intracellular proteins. This complex plays numerous essential roles within the cell by associating with different regulatory particles. Associated with two 19S regulatory particles, forms the 26S proteasome and thus participates in the ATP-dependent degradation of ubiquitinated proteins. The 26S proteasome plays a key role in the maintenance of protein homeostasis by removing misfolded or damaged proteins that could impair cellular functions, and by removing proteins whose functions are no longer required. Associated with the PA200 or PA28, the 20S proteasome mediates ubiquitin-independent protein degradation. This type of proteolysis is required in several pathways including spermatogenesis (20S-PA200 complex) or generation of a subset of MHC class I-presented antigenic peptides (20S-PA28 complex). This Homo sapiens (Human) protein is Proteasome subunit beta type-2.